The chain runs to 827 residues: Inactive rhomboid protein 2 (827 aa).

The interval 1-87 (MDSTDKNGES…GFRRQASLSQ (87 aa)) is disordered. Residues 1–380 (MDSTDKNGES…HRPYFTYWLT (380 aa)) lie on the Cytoplasmic side of the membrane. Position 60 is a phosphoserine (Ser60). Residues 64–77 (QRGRWQEGSSEKRP) are compositionally biased toward basic and acidic residues. Phosphoserine occurs at positions 84, 88, 294, 296, and 299. Residues 381–401 (FVHIIITLLVICTYGIAPVGF) form a helical membrane-spanning segment. At 402 to 631 (AQHVTTQLVL…PDQFYRLWLS (230 aa)) the chain is on the lumenal side. Residues 632-652 (LFLHAGVVHCLVSVVFQMTIL) traverse the membrane as a helical segment. At 653 to 663 (RDLEKLAGWHR) the chain is on the cytoplasmic side. Residues 664-684 (IAIIFILSGITGNLASAIFLP) form a helical membrane-spanning segment. Topologically, residues 685 to 686 (YR) are lumenal. Residues 687-707 (AEVGPAGSQFGLLACLFVELF) traverse the membrane as a helical segment. Residues 708 to 718 (QSWQLLERPWK) lie on the Cytoplasmic side of the membrane. The helical transmembrane segment at 719-739 (AFLNLSAIVLFLFICGLLPWI) threads the bilayer. Residues 740-744 (DNIAH) are Lumenal-facing. A helical transmembrane segment spans residues 745–765 (IFGFLSGLLLAFAFLPYITFG). Over 766 to 773 (TSDKYRKR) the chain is Cytoplasmic. The helical transmembrane segment at 774 to 794 (ALILVSLLVFAGLFASLVIWL) threads the bilayer. At 795 to 827 (YVYPINWPWIEYLTCFPFTSRFCEKYELDQVLH) the chain is on the lumenal side.

Belongs to the peptidase S54 family. In terms of assembly, interacts with EGF. Interacts (via cytoplasmic N-terminus) with FRMD8/iTAP; this interaction leads to mutual protein stabilization. Interacts with ADAM17/TACE. In terms of tissue distribution, detected in retina and spleen.

Its subcellular location is the endoplasmic reticulum membrane. It localises to the cell membrane. Functionally, regulates ADAM17 protease, a sheddase of the epidermal growth factor (EGF) receptor ligands and TNF, thereby plays a role in sleep, cell survival, proliferation, migration and inflammation. Does not exhibit any protease activity on its own. The protein is Inactive rhomboid protein 2 (RHBDF2) of Canis lupus familiaris (Dog).